A 393-amino-acid polypeptide reads, in one-letter code: E3 ubiquitin-protein transferase RMND5B (393 aa).

The residue at position 1 (Met1) is an N-acetylmethionine. Residues Gln116–Val148 form the LisH domain. Residues Pro155–Gln212 form the CTLH domain. The RING-Gid-type zinc finger occupies Cys338–Cys379.

In terms of assembly, identified in the CTLH complex that contains GID4, RANBP9 and/or RANBP10, MKLN1, MAEA, RMND5A (or alternatively its paralog RMND5B), GID8, ARMC8, WDR26 and YPEL5. Within this complex, MAEA, RMND5A (or alternatively its paralog RMND5B), GID8, WDR26, and RANBP9 and/or RANBP10 form the catalytic core, while GID4, MKLN1, ARMC8 and YPEL5 have ancillary roles.

The protein localises to the cytoplasm. Its subcellular location is the cytosol. The catalysed reaction is S-ubiquitinyl-[E2 ubiquitin-conjugating enzyme]-L-cysteine + [acceptor protein]-L-lysine = [E2 ubiquitin-conjugating enzyme]-L-cysteine + N(6)-ubiquitinyl-[acceptor protein]-L-lysine.. Core component of the CTLH E3 ubiquitin-protein ligase complex that selectively accepts ubiquitin from UBE2H and mediates ubiquitination and subsequent proteasomal degradation of the transcription factor HBP1. MAEA and RMND5A are both required for catalytic activity of the CTLH E3 ubiquitin-protein ligase complex. Catalytic activity of the complex is required for normal cell proliferation. The CTLH E3 ubiquitin-protein ligase complex is not required for the degradation of enzymes involved in gluconeogenesis, such as FBP1. In Homo sapiens (Human), this protein is E3 ubiquitin-protein transferase RMND5B (RMND5B).